The sequence spans 537 residues: Phosphoenolpyruvate carboxykinase (ATP) (537 aa).

Residues R61, Y195, and K201 each contribute to the substrate site. Residues K201, H220, and 236 to 244 (GLSGTGKTT) each bind ATP. Residues K201 and H220 each coordinate Mn(2+). Mn(2+) is bound at residue D257. E285 serves as a coordination point for ATP. The span at 312-321 (DFNDGSKTEN) shows a compositional bias: basic and acidic residues. Residues 312–339 (DFNDGSKTENTRSAYPLESIPNASPTGR) form a disordered region. R323 lines the substrate pocket. ATP-binding residues include R323 and T448.

Belongs to the phosphoenolpyruvate carboxykinase (ATP) family. It depends on Mn(2+) as a cofactor.

Its subcellular location is the cytoplasm. The catalysed reaction is oxaloacetate + ATP = phosphoenolpyruvate + ADP + CO2. The protein operates within carbohydrate biosynthesis; gluconeogenesis. Involved in the gluconeogenesis. Catalyzes the conversion of oxaloacetate (OAA) to phosphoenolpyruvate (PEP) through direct phosphoryl transfer between the nucleoside triphosphate and OAA. The chain is Phosphoenolpyruvate carboxykinase (ATP) from Rhodopseudomonas palustris (strain BisB18).